The sequence spans 233 residues: MAFRARVLTLYPEMFPGHLGFSLAGKAMERGQWSLDLVQIRDFATDRHRTVDDTPAGGGAGMVLKADVLARAIDSAGENDPRPRLLMSPRGRPLTQQRVRELAAGDGVVIVCGRFEGVDQRVIEARGLEEVSVGDYVLSGGEPAALIVLDAIIRILPGVMGNDLSGLHESFEGGLLEHPHYTRPQEWEGREIPSILTSGNHGAIEKWRHEEAVRLTRERRPDLFEKVESEKNG.

Residues G113 and 133 to 138 (VGDYVL) contribute to the S-adenosyl-L-methionine site.

Belongs to the RNA methyltransferase TrmD family. As to quaternary structure, homodimer.

The protein localises to the cytoplasm. It catalyses the reaction guanosine(37) in tRNA + S-adenosyl-L-methionine = N(1)-methylguanosine(37) in tRNA + S-adenosyl-L-homocysteine + H(+). Functionally, specifically methylates guanosine-37 in various tRNAs. This is tRNA (guanine-N(1)-)-methyltransferase from Rhizobium etli (strain ATCC 51251 / DSM 11541 / JCM 21823 / NBRC 15573 / CFN 42).